The sequence spans 126 residues: Glycine cleavage system H protein (126 aa).

The Lipoyl-binding domain occupies 21-103; sequence TVTIGISEHA…YEGGWIVKVK (83 aa). Lysine 62 carries the post-translational modification N6-lipoyllysine.

It belongs to the GcvH family. The glycine cleavage system is composed of four proteins: P, T, L and H. Requires (R)-lipoate as cofactor.

Its function is as follows. The glycine cleavage system catalyzes the degradation of glycine. The H protein shuttles the methylamine group of glycine from the P protein to the T protein. This is Glycine cleavage system H protein from Vibrio atlanticus (strain LGP32) (Vibrio splendidus (strain Mel32)).